A 513-amino-acid polypeptide reads, in one-letter code: Probable hydrolase YhcX (513 aa).

In terms of domain architecture, N-acetyltransferase spans 14–212; the sequence is MVIRNIEEKD…YATLMEWNNV (199 aa). The region spanning 229–484 is the CN hydrolase domain; sequence VRICVIQYEM…EMVVIGDVDL (256 aa). The active-site Proton acceptor is the Glu-270. Lys-345 acts as the Proton donor in catalysis. Residue Cys-379 is the Nucleophile of the active site.

Belongs to the carbon-nitrogen hydrolase superfamily. NIT1/NIT2 family.

The protein is Probable hydrolase YhcX (yhcX) of Bacillus subtilis (strain 168).